We begin with the raw amino-acid sequence, 488 residues long: Glutamyl-tRNA(Gln) amidotransferase subunit B, mitochondrial (488 aa).

It belongs to the GatB/GatE family. GatB subfamily. As to quaternary structure, subunit of the heterotrimeric GatFAB amidotransferase (AdT) complex, composed of A, B and F subunits.

It is found in the mitochondrion. It catalyses the reaction L-glutamyl-tRNA(Gln) + L-glutamine + ATP + H2O = L-glutaminyl-tRNA(Gln) + L-glutamate + ADP + phosphate + H(+). In terms of biological role, allows the formation of correctly charged Gln-tRNA(Gln) through the transamidation of misacylated Glu-tRNA(Gln) in the mitochondria. The reaction takes place in the presence of glutamine and ATP through an activated gamma-phospho-Glu-tRNA(Gln). The polypeptide is Glutamyl-tRNA(Gln) amidotransferase subunit B, mitochondrial (Candida albicans (strain SC5314 / ATCC MYA-2876) (Yeast)).